The primary structure comprises 372 residues: MNDKKELKLILVAARNQLSSNDIKCLIAYLESDDCEFETSLQISEPKEQPELLELHRLVAIPALIKVSPAPKQIFAGSNIFSQLQKWLPRWSQEGLTKNLGINLQPSKIDSTRTQKEFLLEDELLVLRQENETLTKRIESQERLLRMVAHELRTPLTAATLAVQSQKLGQIDISKLQEVIKRRLEEIELLSQDLLEVGTTKWEALFNPQKIDLGNISAEVILELEKFWRIRNIEIDTDIPSDLPSVFADQRRMRQVFLNLIENAIKFSKDSGSIKITMIHKTNQWVEITICDKGAGIPLSEQKRIFLDRVRLPQTSEGTSGFGIGLSVCRRIVQVHGGRIWVVSEVGVGSCFHFTVPVWQGQNKEQQNLTKG.

The 214-residue stretch at 147-360 (MVAHELRTPL…CFHFTVPVWQ (214 aa)) folds into the Histidine kinase domain. His-150 carries the post-translational modification Phosphohistidine; by autocatalysis.

Homooligomerizes. Interacts with KaiC. Participates in the KaiBC complex, whose core is composed of a KaiC homohexamer and 6 KaiB.

The catalysed reaction is ATP + protein L-histidine = ADP + protein N-phospho-L-histidine.. In terms of biological role, member of the two-component regulatory system SasA/RpaA involved in genome-wide circadian gene expression. One of several clock output pathways. Participates in the Kai clock protein complex, the main circadian regulator in cyanobacteria, via its interaction with KaiC. KaiC enhances the autophosphorylation activity of SasA, which then transfers its phosphate group to RpaA to activate it. In addition to its output function, recruits fold-shifted KaiB (KaiB(fs)) to KaiC to cooperatively form the KaiB(6):KaiC(6) complex (independent of SasA kinase activity). Required for robustness of the circadian rhythm of gene expression and is involved in clock output, also required for adaptation to light/dark cycles. This is Adaptive-response sensory kinase SasA from Prochlorococcus marinus (strain AS9601).